Here is a 518-residue protein sequence, read N- to C-terminus: Bifunctional enzyme NanE/NanK (518 aa).

The interval 1-234 is manNAc-6-P epimerase; that stretch reads MCRVQGMIEE…DAVESAAKPS (234 aa). A manNAc kinase region spans residues 235-518; that stretch reads SPVLAFDIGG…VADLAATYFS (284 aa). ATP-binding positions include 239–246 and 365–372; these read AFDIGGTK and GIGGGIVL.

In the N-terminal section; belongs to the NanE family. The protein in the C-terminal section; belongs to the ROK (NagC/XylR) family. NanK subfamily.

It catalyses the reaction an N-acyl-D-glucosamine 6-phosphate = an N-acyl-D-mannosamine 6-phosphate. It carries out the reaction an N-acyl-D-mannosamine + ATP = an N-acyl-D-mannosamine 6-phosphate + ADP + H(+). The protein operates within amino-sugar metabolism; N-acetylneuraminate degradation; D-fructose 6-phosphate from N-acetylneuraminate: step 2/5. It participates in amino-sugar metabolism; N-acetylneuraminate degradation; D-fructose 6-phosphate from N-acetylneuraminate: step 3/5. Converts N-acetylmannosamine-6-phosphate (ManNAc-6-P) to N-acetylglucosamine-6-phosphate (GlcNAc-6-P). In terms of biological role, catalyzes the phosphorylation of N-acetylmannosamine (ManNAc) to ManNAc-6-P. This chain is Bifunctional enzyme NanE/NanK (nanEK), found in Brucella melitensis biotype 1 (strain ATCC 23456 / CCUG 17765 / NCTC 10094 / 16M).